We begin with the raw amino-acid sequence, 145 residues long: uncharacterized protein (145 aa).

The residue at position 1 (methionine 1) is an N-acetylmethionine. The disordered stretch occupies residues 15–41 (QLKNNSGGTNGDRNSGANNGGGENSAP). Polar residues predominate over residues 16–27 (LKNNSGGTNGDR). 2 positions are modified to phosphoserine: serine 121 and serine 126. The tract at residues 125–145 (NSFDKQNAKNDDDEDDDDFFD) is disordered. A compositionally biased stretch (acidic residues) spans 135-145 (DDDEDDDDFFD).

Belongs to the PDCD5 family.

This is an uncharacterized protein from Saccharomyces cerevisiae (strain ATCC 204508 / S288c) (Baker's yeast).